The following is a 677-amino-acid chain: Beta-galactosidase (677 aa).

The signal sequence occupies residues 1 to 23 (MPGFLVRILPLLLVLLLLGPTRG). A propeptide spanning residues 24-28 (LRNAT) is cleaved from the precursor. Asn26 carries an N-linked (GlcNAc...) asparagine glycan. Tyr83, Glu129, and Asn187 together coordinate substrate. Residue Glu188 is the Proton donor of the active site. Residues Cys195 and Cys230 are joined by a disulfide bond. Residue Asn247 is glycosylated (N-linked (GlcNAc...) asparagine). The Nucleophile role is filled by Glu268. Tyr333 is a substrate binding site. Asn464, Asn498, Asn542, Asn545, and Asn555 each carry an N-linked (GlcNAc...) asparagine glycan. Cys626 and Cys634 are disulfide-bonded. The tract at residues 650–677 (YDHPSKPVEKRLMPPPPQKNKDSWLDHV) is disordered. Composition is skewed to basic and acidic residues over residues 652–661 (HPSKPVEKRL) and 668–677 (KNKDSWLDHV).

The protein belongs to the glycosyl hydrolase 35 family. As to quaternary structure, homodimer. May form higher multimers. As to expression, detected in placenta (at protein level). Detected in fibroblasts and testis.

Its subcellular location is the lysosome. It localises to the cytoplasm. The protein resides in the perinuclear region. The catalysed reaction is Hydrolysis of terminal non-reducing beta-D-galactose residues in beta-D-galactosides.. In terms of biological role, cleaves beta-linked terminal galactosyl residues from gangliosides, glycoproteins, and glycosaminoglycans. Functionally, has no beta-galactosidase catalytic activity, but plays functional roles in the formation of extracellular elastic fibers (elastogenesis) and in the development of connective tissue. Seems to be identical to the elastin-binding protein (EBP), a major component of the non-integrin cell surface receptor expressed on fibroblasts, smooth muscle cells, chondroblasts, leukocytes, and certain cancer cell types. In elastin producing cells, associates with tropoelastin intracellularly and functions as a recycling molecular chaperone which facilitates the secretions of tropoelastin and its assembly into elastic fibers. The chain is Beta-galactosidase (GLB1) from Homo sapiens (Human).